The primary structure comprises 250 residues: DNA repair protein RecO (250 aa).

It belongs to the RecO family.

In terms of biological role, involved in DNA repair and RecF pathway recombination. The sequence is that of DNA repair protein RecO from Granulibacter bethesdensis (strain ATCC BAA-1260 / CGDNIH1).